The following is a 232-amino-acid chain: 5'-methylthioadenosine/S-adenosylhomocysteine nucleosidase (232 aa).

The active-site Proton acceptor is E12. Residues G78, I152, and 173 to 174 (ME) each bind substrate. D197 (proton donor) is an active-site residue.

It belongs to the PNP/UDP phosphorylase family. MtnN subfamily. As to quaternary structure, homodimer.

The enzyme catalyses S-adenosyl-L-homocysteine + H2O = S-(5-deoxy-D-ribos-5-yl)-L-homocysteine + adenine. It carries out the reaction S-methyl-5'-thioadenosine + H2O = 5-(methylsulfanyl)-D-ribose + adenine. The catalysed reaction is 5'-deoxyadenosine + H2O = 5-deoxy-D-ribose + adenine. It functions in the pathway amino-acid biosynthesis; L-methionine biosynthesis via salvage pathway; S-methyl-5-thio-alpha-D-ribose 1-phosphate from S-methyl-5'-thioadenosine (hydrolase route): step 1/2. In terms of biological role, catalyzes the irreversible cleavage of the glycosidic bond in both 5'-methylthioadenosine (MTA) and S-adenosylhomocysteine (SAH/AdoHcy) to adenine and the corresponding thioribose, 5'-methylthioribose and S-ribosylhomocysteine, respectively. Also cleaves 5'-deoxyadenosine, a toxic by-product of radical S-adenosylmethionine (SAM) enzymes, into 5-deoxyribose and adenine. Thus, is required for in vivo function of the radical SAM enzymes biotin synthase and lipoic acid synthase, that are inhibited by 5'-deoxyadenosine accumulation. The polypeptide is 5'-methylthioadenosine/S-adenosylhomocysteine nucleosidase (Shigella boydii serotype 4 (strain Sb227)).